Consider the following 29-residue polypeptide: Cliotide T18 (29 aa).

Positions 1–29 (GLPICGETCFTGTCYTPGCTCSYPVCKKN) form a cross-link, cyclopeptide (Gly-Asn). Cystine bridges form between Cys5-Cys19, Cys9-Cys21, and Cys14-Cys26.

Contains 3 disulfide bonds. Post-translationally, this is a cyclic peptide. As to expression, expressed in root nodules but not in seed.

In terms of biological role, probably participates in a plant defense mechanism. This Clitoria ternatea (Butterfly pea) protein is Cliotide T18.